The following is a 398-amino-acid chain: Putative FBD-associated F-box protein At5g56700 (398 aa).

The 47-residue stretch at 1–47 (MAKISDLSDELLVKILSFLPTKEAVSTSCLSKQWEFLWMWLSKLEFY) folds into the F-box domain. Positions 340 to 388 (WKNNKSSVPKCLLESLETFEFAGYIGTPEERDFLSYIFKHARCLKSSSI) constitute an FBD domain.

The protein is Putative FBD-associated F-box protein At5g56700 of Arabidopsis thaliana (Mouse-ear cress).